A 732-amino-acid chain; its full sequence is Myosin heavy chain kinase B (732 aa).

In terms of domain architecture, Alpha-type protein kinase spans 124–328 (DPYTTTAQWT…ICQYLNLQSI (205 aa)). 298 to 303 (GIGNLG) is an ATP binding site. The interval 331–428 (KSEKSDCGTV…TNKERSKSKS (98 aa)) is disordered. The span at 356-394 (NNNNNNNNNNNNNNNNNNSNNNNNNNSSISKSLVEISSG) shows a compositional bias: low complexity. The segment covering 395–404 (SKERNDRDSP) has biased composition (basic and acidic residues). Residues 405 to 419 (SRQLFVSNDGNTLNT) show a composition bias toward polar residues. 7 WD repeats span residues 458–486 (KGYH…RVYD), 500–528 (GHEG…KVWD), 540–568 (GHDK…KVWD), 580–608 (SHAR…KVWD), 620–648 (GHTK…RVWN), 660–688 (GHDR…KIWD), and 700–730 (GHNA…RVWG).

This sequence belongs to the protein kinase superfamily. Alpha-type protein kinase family. ALPK subfamily.

It catalyses the reaction L-threonyl-[myosin heavy-chain] + ATP = O-phospho-L-threonyl-[myosin heavy-chain] + ADP + H(+). Catalyzes its autophosphorylation, which is needed for enzymatic activity and phosphorylates myosin II heavy chain at a threonine in the C-terminal tail region. This phosphorylation is critical in regulating the assembly and disassembly of myosin II filament. Participates in control of myosin localization. The polypeptide is Myosin heavy chain kinase B (mhkB) (Dictyostelium discoideum (Social amoeba)).